Here is a 106-residue protein sequence, read N- to C-terminus: Small ribosomal subunit protein uS10 (106 aa).

This sequence belongs to the universal ribosomal protein uS10 family. Part of the 30S ribosomal subunit.

Its function is as follows. Involved in the binding of tRNA to the ribosomes. This chain is Small ribosomal subunit protein uS10, found in Prochlorococcus marinus (strain MIT 9515).